A 338-amino-acid chain; its full sequence is Glyceraldehyde-3-phosphate dehydrogenase 2 (338 aa).

NAD(+) is bound by residues 13-14 (TI) and glycine 111. A D-glyceraldehyde 3-phosphate-binding site is contributed by 140 to 142 (SCN). The active-site Nucleophile is cysteine 141. Arginine 169 is a binding site for NAD(+). D-glyceraldehyde 3-phosphate is bound at residue 195–196 (HG). Glutamine 300 is an NAD(+) binding site.

This sequence belongs to the glyceraldehyde-3-phosphate dehydrogenase family. Homotetramer.

The protein localises to the cytoplasm. It catalyses the reaction D-glyceraldehyde 3-phosphate + phosphate + NADP(+) = (2R)-3-phospho-glyceroyl phosphate + NADPH + H(+). The catalysed reaction is D-glyceraldehyde 3-phosphate + phosphate + NAD(+) = (2R)-3-phospho-glyceroyl phosphate + NADH + H(+). The protein operates within carbohydrate degradation; glycolysis; pyruvate from D-glyceraldehyde 3-phosphate: step 1/5. This Methanosarcina barkeri (strain Fusaro / DSM 804) protein is Glyceraldehyde-3-phosphate dehydrogenase 2.